The sequence spans 75 residues: Putative membrane protein insertion efficiency factor (75 aa).

It belongs to the UPF0161 family.

The protein localises to the cell membrane. Functionally, could be involved in insertion of integral membrane proteins into the membrane. The protein is Putative membrane protein insertion efficiency factor of Bacillus velezensis (strain DSM 23117 / BGSC 10A6 / LMG 26770 / FZB42) (Bacillus amyloliquefaciens subsp. plantarum).